The sequence spans 205 residues: Large ribosomal subunit protein uL18 (205 aa).

The protein belongs to the universal ribosomal protein uL18 family. Part of the 50S ribosomal subunit. Contacts the 5S and 23S rRNAs.

This is one of the proteins that bind and probably mediate the attachment of the 5S RNA into the large ribosomal subunit, where it forms part of the central protuberance. This is Large ribosomal subunit protein uL18 from Pyrobaculum arsenaticum (strain DSM 13514 / JCM 11321 / PZ6).